The chain runs to 100 residues: Urease subunit gamma (100 aa).

This sequence belongs to the urease gamma subunit family. As to quaternary structure, heterotrimer of UreA (gamma), UreB (beta) and UreC (alpha) subunits. Three heterotrimers associate to form the active enzyme.

The protein localises to the cytoplasm. It catalyses the reaction urea + 2 H2O + H(+) = hydrogencarbonate + 2 NH4(+). Its pathway is nitrogen metabolism; urea degradation; CO(2) and NH(3) from urea (urease route): step 1/1. The protein is Urease subunit gamma of Escherichia coli.